We begin with the raw amino-acid sequence, 280 residues long: MKLFVLAAVLGVCLADRLDNKYLPPRGNAGAGFGPGFGGAGPKGGGSGFGGAGSGFGGAGSGFGGAGSGFGGGAGGGFGHGGAGSGFGGQAGGYSGAGGAGGYIGGASGQYSGRGGAASADANAQILRLNNEVTAEGFAYDFETSNGIRADAQGVATNGVQSQGSFAYKGDDGQDYSITYTADENGFVSQGAHLPTPPPIPEEILKSLEQNARDEAAGIVDDGTYRGEGAGAGGAGGYSGAGGCSGGAGGAGGFGAGGAGRAGGTATSASEAPTTTIRLM.

An N-terminal signal peptide occupies residues Met-1–Ala-15. The 64-residue stretch at Ala-135–Pro-198 folds into the Chitin-binding type R&amp;R domain. The segment at Gly-258–Met-280 is disordered.

In Manduca sexta (Tobacco hawkmoth), this protein is Pupal cuticle protein 36a (PCP36a).